Reading from the N-terminus, the 260-residue chain is MAKEWGYADHNGPDHWHELYPIAKGDNQSPIELHTKDIKHDPSLLPWTASYDPGSAKTILNNGKTCRVVFDDTYDRSMLRGGPLTAAYRLRQFHLHWGSSDDHGSEHTVDGVKYAAELHLVHWNSKYNSFATALKHPDGVAVVGIFLKIGREKGEFQLVLDALDKIKTKGKEAPFTNFNPSCLFPACRDYWTYHGSFTTPPCEECIVWLLLKEPITVSSDQMAKLRSLYSSAENEPPVPLVRNWRPPQPIKGRIVKASFK.

The residue at position 2 (alanine 2) is an N-acetylalanine. The 257-residue stretch at 3–259 (KEWGYADHNG…IKGRIVKASF (257 aa)) folds into the Alpha-carbonic anhydrase domain. Phosphoserine is present on residues serine 29, serine 43, serine 50, and serine 55. Residues 64–67 (KTCR) are involved in proton transfer. Threonine 73 is subject to Phosphothreonine. Zn(2+) is bound by residues histidine 94, histidine 96, and histidine 119. Tyrosine 127 is subject to Phosphotyrosine. Threonine 176 is modified (phosphothreonine). Cysteine 182 and cysteine 187 each carry S-glutathionyl cysteine. Residue 198–199 (TT) participates in substrate binding. Position 216 is a phosphothreonine (threonine 216). Serine 219 bears the Phosphoserine mark.

The protein belongs to the alpha-carbonic anhydrase family. The cofactor is Zn(2+). Post-translationally, S-thiolated both by thiol-disulfide exchange with glutathione disulfide and by oxyradical-initiated S-thiolation with reduced glutathione. S-glutathionylated in hepatocytes under oxidative stress.

The protein localises to the cytoplasm. The catalysed reaction is hydrogencarbonate + H(+) = CO2 + H2O. With respect to regulation, inhibited by acetazolamide. In terms of biological role, reversible hydration of carbon dioxide. This chain is Carbonic anhydrase 3, found in Sus scrofa (Pig).